The sequence spans 1387 residues: Dicer-like protein 2-1 (1387 aa).

Residues 26–205 form the Helicase ATP-binding domain; sequence MFEASLKENI…LLKIESNLDA (180 aa). 39–46 contacts ATP; sequence MGTGSGKT. The DEAH box motif lies at 146–149; sequence DEAH. Residues 370–535 form the Helicase C-terminal domain; sequence KFRSLLEFLD…AYEDDERRLR (166 aa). A Dicer dsRNA-binding fold domain is found at 565–659; sequence AVAHLNHFCA…LPFKRNLELK (95 aa). 2 consecutive RNase III domains span residues 915–1055 and 1094–1277; these read ATRL…IDGG and DDHL…IDSH. Mg(2+) is bound by residues glutamate 1133, aspartate 1263, and glutamate 1266.

Belongs to the helicase family. Dicer subfamily. It depends on Mg(2+) as a cofactor. Mn(2+) is required as a cofactor.

Dicer-like endonuclease involved in cleaving double-stranded RNA in the RNA interference (RNAi) pathway. Produces 21 to 25 bp dsRNAs (siRNAs) which target the selective destruction of homologous RNAs leading to sequence-specific suppression of gene expression, called post-transcriptional gene silencing (PTGS). Part of a broad host defense response against viral infection and transposons. The protein is Dicer-like protein 2-1 (dcl2-1) of Aspergillus niger (strain ATCC MYA-4892 / CBS 513.88 / FGSC A1513).